A 370-amino-acid chain; its full sequence is MKIEAISTTIVDVPTRRPLQMSFTTVHKQSYVIVQVTAGGLVGIGEGGSVGGPTWGSESAETIKVIIDNYLAPLLIGKDASNLSEARALMDRAVTGNLSAKAAIDIALHDLKARALNLSIADLIGGTMRKSIPIAWTLASGDTARDIDSALEMIEARRHNRFKVKLGARTPAQDLEHIRSIVKAVGDKASVRVDVNQGWDEQTASIWIPRLEEAGVELVEQPVPRANFGALRRLTEQNGVAILADESLSSLSSAFELARDRAVDAFSLKLCNMGGIANTLKVAAIAEAAGISSYGGTMLDSTVGTAAALHVYATLPSLPYGCELIGPWVLSDRLTQQDLEIKDFEVHLPVGSGLGVDLDHDKVRHYTRAA.

Lysine 165 acts as the Proton acceptor in catalysis. Aspartate 194, glutamate 220, and aspartate 245 together coordinate Mn(2+). Glutamate 323 acts as the Proton donor in catalysis.

It belongs to the mandelate racemase/muconate lactonizing enzyme family. It depends on Mn(2+) as a cofactor.

The enzyme catalyses 2-[(2R)-2-chloro-2,5-dihydro-5-oxofuryl]acetate = 3-chloro-cis,cis-muconate + H(+). Its pathway is aromatic compound metabolism; 3-chlorocatechol degradation. The protein is Chloromuconate cycloisomerase (tfdD) of Delftia acidovorans (Pseudomonas acidovorans).